Consider the following 151-residue polypeptide: MQIWVDADACPKVVKEVLCRAATRTGLQITFVANHYVPVPTAPNIKSIQVESGFDVADDEIVRRSEAGDLVISGDIPLAAELIEKKVQVLNPRGELYTEATIKARLNIRDFMDTMRASGIQTGGPAALSQTDRREFANQLDRILAKVKKTI.

The protein belongs to the UPF0178 family.

This chain is UPF0178 protein VSAL_I0701, found in Aliivibrio salmonicida (strain LFI1238) (Vibrio salmonicida (strain LFI1238)).